The primary structure comprises 208 residues: Proheparin-binding EGF-like growth factor (208 aa).

The first 19 residues, 1–19, serve as a signal peptide directing secretion; it reads MKLLPSVVLKLFLAAVLSA. The propeptide at 20 to 62 is or 72, or 73, or 76, or 81; that stretch reads LVTGESLERLRRGLAAGTSNPDPPTVSTDQLLPLGGGRDRKVR. The Extracellular portion of the chain corresponds to 20-160; that stretch reads LVTGESLERL…ENRLYTYDHT (141 aa). The interval 33 to 56 is disordered; sequence LAAGTSNPDPPTVSTDQLLPLGGG. The segment covering 36 to 49 has biased composition (polar residues); it reads GTSNPDPPTVSTDQ. Threonine 37 carries O-linked (GalNAc...) threonine glycosylation. Serine 38 is a glycosylation site (O-linked (GalNAc...) serine). Threonine 44, threonine 47, threonine 75, and threonine 85 each carry an O-linked (GalNAc...) threonine glycan. The disordered stretch occupies residues 82–104; that stretch reads ALATPNKEEHGKRKKKGKGLGKK. The segment covering 93–102 has biased composition (basic residues); sequence KRKKKGKGLG. An EGF-like domain is found at 104–144; the sequence is KRDPCLRKYKDFCIHGECKYVKELRAPSCICHPGYHGERCH. Cystine bridges form between cysteine 108–cysteine 121, cysteine 116–cysteine 132, and cysteine 134–cysteine 143. A propeptide spans 149–208 (C-terminal); that stretch reads PVENRLYTYDHTTILAVVAVVLSSVCLLVIVGLLMFRYHRRGGYDVENEEKVKLGMTNSH. The helical transmembrane segment at 161-184 threads the bilayer; the sequence is TILAVVAVVLSSVCLLVIVGLLMF. Residues 185–208 are Cytoplasmic-facing; sequence RYHRRGGYDVENEEKVKLGMTNSH.

As to quaternary structure, interacts with FBLN1. Interacts with EGFR and ERBB4. Several N-termini have been identified by direct sequencing. The forms with N-termini 63, 73 and 74 have been tested and found to be biologically active. Post-translationally, O-glycosylated with core 1 or possibly core 8 glycans. Thr-47 is a minor glycosylation site compared to Thr-44.

Its subcellular location is the secreted. It localises to the extracellular space. The protein resides in the cell membrane. Its function is as follows. Growth factor that mediates its effects via EGFR, ERBB2 and ERBB4. Required for normal cardiac valve formation and normal heart function. Promotes smooth muscle cell proliferation. May be involved in macrophage-mediated cellular proliferation. It is mitogenic for fibroblasts, but not endothelial cells. It is able to bind EGF receptor/EGFR with higher affinity than EGF itself and is a far more potent mitogen for smooth muscle cells than EGF. Also acts as a diphtheria toxin receptor. This chain is Proheparin-binding EGF-like growth factor (HBEGF), found in Homo sapiens (Human).